A 339-amino-acid polypeptide reads, in one-letter code: Ketol-acid reductoisomerase (NADP(+)) (339 aa).

In terms of domain architecture, KARI N-terminal Rossmann spans 1–182 (MRVYYDRDAD…GGGRAGVIET (182 aa)). NADP(+) is bound by residues 24–27 (YGSQ), Arg48, Ser51, Thr53, and 83–86 (DELQ). Residue His108 is part of the active site. NADP(+) is bound at residue Gly134. Residues 183–328 (TFKEECETDL…KKLRSMMPWI (146 aa)) form the KARI C-terminal knotted domain. Positions 191, 195, 227, and 231 each coordinate Mg(2+). Position 252 (Ser252) interacts with substrate.

The protein belongs to the ketol-acid reductoisomerase family. Mg(2+) serves as cofactor.

The catalysed reaction is (2R)-2,3-dihydroxy-3-methylbutanoate + NADP(+) = (2S)-2-acetolactate + NADPH + H(+). The enzyme catalyses (2R,3R)-2,3-dihydroxy-3-methylpentanoate + NADP(+) = (S)-2-ethyl-2-hydroxy-3-oxobutanoate + NADPH + H(+). It participates in amino-acid biosynthesis; L-isoleucine biosynthesis; L-isoleucine from 2-oxobutanoate: step 2/4. Its pathway is amino-acid biosynthesis; L-valine biosynthesis; L-valine from pyruvate: step 2/4. In terms of biological role, involved in the biosynthesis of branched-chain amino acids (BCAA). Catalyzes an alkyl-migration followed by a ketol-acid reduction of (S)-2-acetolactate (S2AL) to yield (R)-2,3-dihydroxy-isovalerate. In the isomerase reaction, S2AL is rearranged via a Mg-dependent methyl migration to produce 3-hydroxy-3-methyl-2-ketobutyrate (HMKB). In the reductase reaction, this 2-ketoacid undergoes a metal-dependent reduction by NADPH to yield (R)-2,3-dihydroxy-isovalerate. The protein is Ketol-acid reductoisomerase (NADP(+)) of Bartonella tribocorum (strain CIP 105476 / IBS 506).